The sequence spans 263 residues: Chymotrypsinogen B (263 aa).

Positions 1–18 are cleaved as a signal peptide; that stretch reads MAFLWLVSCFALVGATFG. Disulfide bonds link cysteine 19/cysteine 140, cysteine 60/cysteine 76, cysteine 154/cysteine 219, cysteine 186/cysteine 200, and cysteine 209/cysteine 238. The 228-residue stretch at 34 to 261 folds into the Peptidase S1 domain; the sequence is IVNGEDAIPG…LMPWVQQILE (228 aa). The active-site Charge relay system is the histidine 75. At serine 93 the chain carries Phosphoserine. Aspartate 120 (charge relay system) is an active-site residue. Residue serine 213 is the Charge relay system of the active site.

It belongs to the peptidase S1 family.

It localises to the secreted. Its subcellular location is the extracellular space. The catalysed reaction is Preferential cleavage: Tyr-|-Xaa, Trp-|-Xaa, Phe-|-Xaa, Leu-|-Xaa.. This chain is Chymotrypsinogen B (Ctrb1), found in Rattus norvegicus (Rat).